The following is an 87-amino-acid chain: DNA-directed RNA polymerase subunit omega (87 aa).

It belongs to the RNA polymerase subunit omega family. As to quaternary structure, the RNAP catalytic core consists of 2 alpha, 1 beta, 1 beta' and 1 omega subunit. When a sigma factor is associated with the core the holoenzyme is formed, which can initiate transcription.

It carries out the reaction RNA(n) + a ribonucleoside 5'-triphosphate = RNA(n+1) + diphosphate. Promotes RNA polymerase assembly. Latches the N- and C-terminal regions of the beta' subunit thereby facilitating its interaction with the beta and alpha subunits. The polypeptide is DNA-directed RNA polymerase subunit omega (Thioalkalivibrio sulfidiphilus (strain HL-EbGR7)).